Reading from the N-terminus, the 212-residue chain is MNLFDKKHLVTQADALPGRNTPMPIATLHAVNEHSMTNVPAGMEIAYFAMGCFWGVERLFWQLPGVYSTAAGYAGGYTPNPTYREVCSGQTGHAEAVRIVYDPAVIRYEQLLQTFWENHDPTQGMQQGNDHGTQYRSAIYPLTPEQNAAAHASRERFQSAMAAAGDHRPITTEIAHATPFYYAEDEHQQYLHKNPYGYCGIGGIGVCLPPDA.

The active site involves C52.

This sequence belongs to the MsrA Met sulfoxide reductase family.

It carries out the reaction L-methionyl-[protein] + [thioredoxin]-disulfide + H2O = L-methionyl-(S)-S-oxide-[protein] + [thioredoxin]-dithiol. The enzyme catalyses [thioredoxin]-disulfide + L-methionine + H2O = L-methionine (S)-S-oxide + [thioredoxin]-dithiol. Its function is as follows. Has an important function as a repair enzyme for proteins that have been inactivated by oxidation. Catalyzes the reversible oxidation-reduction of methionine sulfoxide in proteins to methionine. The protein is Peptide methionine sulfoxide reductase MsrA of Salmonella choleraesuis (strain SC-B67).